A 953-amino-acid polypeptide reads, in one-letter code: MSKKRLHEIAKEIGKSSKEVVEHAKYLGLDVKSHASSVEEADAKKIISSFSKASKPDVTASQTVKPKEVAQPSVTVVKETGSEHVEKTQVSKPKSRNFKAEREARAKEQAARKQANGSSHRSQERRGGYRQPNNHQTNEQGDKRITHRSQGDTNDKRIERKASNVSPRHDNHQLVGDRNRSFAKENHKNGRFTNQKKQGRQEPQSKSPKIDFKARAAALKAEQNAEYSRQSETRFRAQQEAKRLAELARQEAKEAALKAQAEEMSHREAALKSIEEAETKLKSSNISAKSTADNRRKKQARPEKNRELTHHSQEGQKKNKKSWNSQNQVRNQKNSNWNKNKKTKKGKNVKNTNTAPKPVTERKFHELPKEFEYTEGMTVAEIAKRIKREPAEIVKKLFMMGVMATQNQSLDGDTIELLMVDYGIEAKAKVEVDDADIERFFEDENYLNPENIVERAPVVTIMGHVDHGKTTLLDTLRNSRVATGEAGGITQHIGAYQIEEAGKKITFLDTPGHAAFTSMRARGASVTDITILIVAADDGVMPQTIEAINHSKAAGVPIIVAINKIDKPGANPERVIAELAEYGIISTAWGGECEFVEISAKFNKNIDELLETVLLVAEVEELKADPTVRAIGTVIEARLDKGKGAIATLLVQQGTLHVQDPIVVGNTFGRVRAMVNDLGRRVKSAEPSTPVSITGLNETPMAGDHFAVYADEKAARAAGEERSKRALLKQRQNTQRVSLDNLFDTLKAGEIKTVNVIIKADVQGSVEALAASLVKIEVEGVRVNVVHSAVGAINESDVTLAEASNAVIIGFNVRPTPQARQQADTDDVEIRLHSIIYKVIEEVEEAMKGKLDPVYQEKILGEAIIRETFKVSKVGTIGGFMVINGKVTRDSSVRVIRDSVVIFDGKLASLKHYKDDVKEVGNAQEGGLMIENFNDLKVDDTIEAYIMEEIVRK.

Disordered stretches follow at residues 48–240 (SSFS…AQQE) and 279–363 (TKLK…TERK). Composition is skewed to basic and acidic residues over residues 80-89 (TGSEHVEKTQ), 98-111 (FKAE…EQAA), and 140-188 (QGDK…ENHK). Residues 191–207 (RFTNQKKQGRQEPQSKS) are compositionally biased toward polar residues. Residues 229–240 (RQSETRFRAQQE) show a composition bias toward basic and acidic residues. Over residues 282 to 291 (KSSNISAKST) the composition is skewed to polar residues. Residues 300-317 (ARPEKNRELTHHSQEGQK) show a composition bias toward basic and acidic residues. Over residues 322-338 (SWNSQNQVRNQKNSNWN) the composition is skewed to low complexity. Over residues 339-348 (KNKKTKKGKN) the composition is skewed to basic residues. Residues 454-623 (ERAPVVTIMG…LLVAEVEELK (170 aa)) form the tr-type G domain. Positions 463–470 (GHVDHGKT) are G1. 463–470 (GHVDHGKT) contributes to the GTP binding site. The interval 488-492 (GITQH) is G2. The G3 stretch occupies residues 509–512 (DTPG). Residues 509 to 513 (DTPGH) and 563 to 566 (NKID) each bind GTP. The interval 563–566 (NKID) is G4. Residues 599 to 601 (SAK) form a G5 region.

It belongs to the TRAFAC class translation factor GTPase superfamily. Classic translation factor GTPase family. IF-2 subfamily.

The protein resides in the cytoplasm. Functionally, one of the essential components for the initiation of protein synthesis. Protects formylmethionyl-tRNA from spontaneous hydrolysis and promotes its binding to the 30S ribosomal subunits. Also involved in the hydrolysis of GTP during the formation of the 70S ribosomal complex. This is Translation initiation factor IF-2 from Streptococcus pyogenes serotype M1.